A 142-amino-acid polypeptide reads, in one-letter code: Hemoglobin subunit alpha-B (142 aa).

One can recognise a Globin domain in the interval 2-142 (PFSASDRHDI…VSETLYSKYR (141 aa)). Gln59 contributes to the O2 binding site. His88 contacts heme b.

The protein belongs to the globin family. As to quaternary structure, heterotetramer of either two alpha-B chains or two alpha-C chains and two beta chains. The two major hemoglobins, B and C, associate upon deoxygenation to form a trimer of tetramers, BC2, that has a much lower affinity for oxygen than either component alone. As to expression, red blood cells.

Its function is as follows. The alpha-B chain is a component of adult hemoglobin B. This chain is Hemoglobin subunit alpha-B, found in Aquarana catesbeiana (American bullfrog).